The chain runs to 111 residues: Ferredoxin-thioredoxin reductase, catalytic chain (111 aa).

Cys-52 is a binding site for [4Fe-4S] cluster. The active-site Nucleophile is Cys-54. A disulfide bridge connects residues Cys-54 and Cys-84. [4Fe-4S] cluster-binding residues include Cys-71, Cys-73, and Cys-82.

The protein belongs to the ferredoxin thioredoxin reductase beta subunit family. As to quaternary structure, heterodimer of subunit A (variable subunit) and subunit B (catalytic subunit). Heterodimeric FTR forms a complex with ferredoxin and thioredoxin. It depends on [4Fe-4S] cluster as a cofactor.

Its subcellular location is the plastid. The protein localises to the chloroplast. The catalysed reaction is [thioredoxin]-disulfide + 2 reduced [2Fe-2S]-[ferredoxin] + 2 H(+) = [thioredoxin]-dithiol + 2 oxidized [2Fe-2S]-[ferredoxin]. In terms of biological role, catalytic subunit of the ferredoxin-thioredoxin reductase (FTR), which catalyzes the two-electron reduction of thioredoxins by the electrons provided by reduced ferredoxin. This Cyanidium caldarium (Red alga) protein is Ferredoxin-thioredoxin reductase, catalytic chain (ftrB).